Reading from the N-terminus, the 289-residue chain is Inorganic pyrophosphatase (289 aa).

Ser2 carries the post-translational modification N-acetylserine. Position 57 is an N6-acetyllysine (Lys57). Residues Asp116, Asp121, and Asp153 each contribute to the Mg(2+) site. Ser250 is modified (phosphoserine).

Belongs to the PPase family. In terms of assembly, homodimer. Mg(2+) is required as a cofactor. In terms of processing, the N-terminus is blocked. As to expression, highest levels are found in retinal rod outer segments.

Its subcellular location is the cytoplasm. It carries out the reaction diphosphate + H2O = 2 phosphate + H(+). The chain is Inorganic pyrophosphatase (PPA1) from Bos taurus (Bovine).